A 401-amino-acid polypeptide reads, in one-letter code: Dual-specificity RNA methyltransferase RlmN (401 aa).

Residue E114 is the Proton acceptor of the active site. Residues 120–365 (DKGRGTLCVS…TMVRRTRGDD (246 aa)) enclose the Radical SAM core domain. An intrachain disulfide couples C127 to C370. [4Fe-4S] cluster-binding residues include C134, C138, and C141. Residues 187–188 (GE), S219, 241–243 (SLH), and N327 contribute to the S-adenosyl-L-methionine site. The active-site S-methylcysteine intermediate is C370.

Belongs to the radical SAM superfamily. RlmN family. [4Fe-4S] cluster is required as a cofactor.

Its subcellular location is the cytoplasm. It catalyses the reaction adenosine(2503) in 23S rRNA + 2 reduced [2Fe-2S]-[ferredoxin] + 2 S-adenosyl-L-methionine = 2-methyladenosine(2503) in 23S rRNA + 5'-deoxyadenosine + L-methionine + 2 oxidized [2Fe-2S]-[ferredoxin] + S-adenosyl-L-homocysteine. It carries out the reaction adenosine(37) in tRNA + 2 reduced [2Fe-2S]-[ferredoxin] + 2 S-adenosyl-L-methionine = 2-methyladenosine(37) in tRNA + 5'-deoxyadenosine + L-methionine + 2 oxidized [2Fe-2S]-[ferredoxin] + S-adenosyl-L-homocysteine. Specifically methylates position 2 of adenine 2503 in 23S rRNA and position 2 of adenine 37 in tRNAs. m2A2503 modification seems to play a crucial role in the proofreading step occurring at the peptidyl transferase center and thus would serve to optimize ribosomal fidelity. The protein is Dual-specificity RNA methyltransferase RlmN of Xanthomonas campestris pv. campestris (strain B100).